Here is a 306-residue protein sequence, read N- to C-terminus: Large ribosomal subunit protein mL45 (306 aa).

It belongs to the mitochondrion-specific ribosomal protein mL45 family. Component of the mitochondrial ribosome large subunit (39S) which comprises a 16S rRNA and about 50 distinct proteins.

The protein localises to the mitochondrion. Component of the mitochondrial large ribosomal subunit (mt-LSU). Within the mitochondrial ribosomes, required to direct the nascent polypeptide toward the tunnel exit and position the exit at a distance from the membrane surface. The chain is Large ribosomal subunit protein mL45 (MRPL45) from Bos taurus (Bovine).